The chain runs to 390 residues: Formamidopyrimidine-DNA glycosylase (390 aa).

Catalysis depends on Pro-2, which acts as the Schiff-base intermediate with DNA. The Proton donor role is filled by Glu-3. Residue Lys-60 is the Proton donor; for beta-elimination activity of the active site. DNA-binding residues include Tyr-107, Arg-126, Lys-167, and Asn-186. A disordered region spans residues 283 to 390 (AEKAAKVRPA…AGKKPKGRKS (108 aa)). The segment covering 301 to 316 (DDGDGEEDEQETEKED) has biased composition (acidic residues). A compositionally biased stretch (basic residues) spans 321–337 (SKKGQKPRGGRGKKPAS). The span at 343–355 (ESDDDGDDSEAEE) shows a compositional bias: acidic residues. Basic residues predominate over residues 360–370 (PKGRGTKPAIK).

This sequence belongs to the FPG family. Monomer. As to expression, expressed in leaves (at protein levels).

The protein resides in the nucleus. The enzyme catalyses Hydrolysis of DNA containing ring-opened 7-methylguanine residues, releasing 2,6-diamino-4-hydroxy-5-(N-methyl)formamidopyrimidine.. It carries out the reaction 2'-deoxyribonucleotide-(2'-deoxyribose 5'-phosphate)-2'-deoxyribonucleotide-DNA = a 3'-end 2'-deoxyribonucleotide-(2,3-dehydro-2,3-deoxyribose 5'-phosphate)-DNA + a 5'-end 5'-phospho-2'-deoxyribonucleoside-DNA + H(+). In terms of biological role, involved in base excision repair of DNA damaged by oxidation or by mutagenic agents. Acts as a DNA glycosylase that recognizes and removes damaged bases. Can process efficiently 4,6-diamino-5-formamidopyrimidine (FapyA), 2,6-diamino-4- hydroxy-5-formamidopyrimidine (FapyG) and the further oxidation products of 8-oxoguanine (8-oxoG), such as guanidinohydantoin and spiroiminodihydantoin. Has marginal activity towards 8-oxoG. Has AP (apurinic/apyrimidinic) lyase activity. Cleaves the DNA backbone by beta-delta elimination to generate a single-strand break at the site of the removed base with both 3'- and 5'-phosphates. This Arabidopsis thaliana (Mouse-ear cress) protein is Formamidopyrimidine-DNA glycosylase (FPG1).